A 184-amino-acid chain; its full sequence is Effector CFEM1 (184 aa).

An N-terminal signal peptide occupies residues 1–17; it reads MKYSVAFVALAAVAAQA. The CFEM domain occupies 18-112; that stretch reads QSLADVPKCA…PTTTAAATST (95 aa). Cystine bridges form between C26-C68, C30-C63, C41-C48, and C50-C85. D45 is a binding site for heme. Disordered regions lie at residues 83–106 and 136–163; these read NLCK…PTTT and IIPT…EQAN. Residues 88-103 are compositionally biased toward basic and acidic residues; that stretch reads PPKESEAKSTAEEEKP. N163 carries GPI-anchor amidated asparagine lipidation. Positions 164-184 are cleaved as a propeptide — removed in mature form; the sequence is GAAGLKGLGALAMAAFAALAL.

The protein belongs to the RBT5 family. In terms of assembly, interacts with Z.mays LRR5; the interaction is direct. Interacts (via CFEM domain) with Z.mays WAK17 isoform 2; the interaction is direct.

It is found in the secreted. The protein resides in the cell wall. The protein localises to the cell membrane. It localises to the cell septum. Its subcellular location is the cytoplasm. Its function is as follows. Suppresses host programmed cell death during infection by binding to Z.mays WAK17 isoform 2 and Z.mays LRR5, to prevent activation of Z.mays WAK17 isoform 1 and the downstream hypersensitive response. In Gibberella zeae (strain ATCC MYA-4620 / CBS 123657 / FGSC 9075 / NRRL 31084 / PH-1) (Wheat head blight fungus), this protein is Effector CFEM1.